A 528-amino-acid polypeptide reads, in one-letter code: Chromosomal replication initiator protein DnaA (528 aa).

A domain I, interacts with DnaA modulators region spans residues Met1–Ala104. Positions Ala93–Glu159 are disordered. Residues Ala104–Glu123 are compositionally biased toward basic and acidic residues. The tract at residues Pro105 to Asn187 is domain II. Over residues Thr149–Glu159 the composition is skewed to acidic residues. The domain III, AAA+ region stretch occupies residues Ser188–Ala404. ATP is bound by residues Gly232, Gly234, Lys235, and Thr236. The tract at residues Ser405–Arg528 is domain IV, binds dsDNA.

It belongs to the DnaA family. In terms of assembly, oligomerizes as a right-handed, spiral filament on DNA at oriC.

The protein resides in the cytoplasm. In terms of biological role, plays an essential role in the initiation and regulation of chromosomal replication. ATP-DnaA binds to the origin of replication (oriC) to initiate formation of the DNA replication initiation complex once per cell cycle. Binds the DnaA box (a 9 base pair repeat at the origin) and separates the double-stranded (ds)DNA. Forms a right-handed helical filament on oriC DNA; dsDNA binds to the exterior of the filament while single-stranded (ss)DNA is stabiized in the filament's interior. The ATP-DnaA-oriC complex binds and stabilizes one strand of the AT-rich DNA unwinding element (DUE), permitting loading of DNA polymerase. After initiation quickly degrades to an ADP-DnaA complex that is not apt for DNA replication. Binds acidic phospholipids. The sequence is that of Chromosomal replication initiator protein DnaA from Rhodococcus opacus (strain B4).